A 262-amino-acid chain; its full sequence is Ribosomal RNA small subunit methyltransferase A (262 aa).

Positions 12, 14, 38, 60, 83, and 102 each coordinate S-adenosyl-L-methionine.

It belongs to the class I-like SAM-binding methyltransferase superfamily. rRNA adenine N(6)-methyltransferase family. RsmA subfamily.

The protein localises to the cytoplasm. It carries out the reaction adenosine(1518)/adenosine(1519) in 16S rRNA + 4 S-adenosyl-L-methionine = N(6)-dimethyladenosine(1518)/N(6)-dimethyladenosine(1519) in 16S rRNA + 4 S-adenosyl-L-homocysteine + 4 H(+). Specifically dimethylates two adjacent adenosines (A1518 and A1519) in the loop of a conserved hairpin near the 3'-end of 16S rRNA in the 30S particle. May play a critical role in biogenesis of 30S subunits. The chain is Ribosomal RNA small subunit methyltransferase A from Pelagibacter ubique (strain HTCC1062).